The chain runs to 174 residues: DNA replication inhibitor plutonium (174 aa).

ANK repeat units follow at residues 39 to 68 and 72 to 103; these read YGNT…NIFA and FGQN…DFNL. At T167 the chain carries Phosphothreonine.

In terms of biological role, inhibits DNA replication early in developments. May bind and block the action of a replication or initiation factor. The polypeptide is DNA replication inhibitor plutonium (plu) (Drosophila melanogaster (Fruit fly)).